The chain runs to 240 residues: Guanine nucleotide exchange factor sopE2 (240 aa).

The GEF catalytic domain stretch occupies residues 78 to 240 (LTSKTVKDFM…IANKYLQNAS (163 aa)).

This sequence belongs to the GEF (guanine exchange factor) SopE family.

Its subcellular location is the secreted. Functionally, activator for CDC42 by directly engaging this Rho GTPase and acting as potent guanine nucleotide exchange factor (GEF). This activation results in actin cytoskeleton rearrangements and stimulates membrane ruffling, promoting bacterial entry into non-phagocytic cells. Also activates NF-kB, p38 and ERK kinases, which are known to be involved in the induction of IL-8 expression. Chaperone InvB is required for secretion, translocation and stabilization of intracellular levels of sopE2. This chain is Guanine nucleotide exchange factor sopE2 (sopE2), found in Salmonella typhimurium (strain LT2 / SGSC1412 / ATCC 700720).